The sequence spans 291 residues: ATP synthase gamma chain (291 aa).

This sequence belongs to the ATPase gamma chain family. As to quaternary structure, F-type ATPases have 2 components, CF(1) - the catalytic core - and CF(0) - the membrane proton channel. CF(1) has five subunits: alpha(3), beta(3), gamma(1), delta(1), epsilon(1). CF(0) has three main subunits: a, b and c.

Its subcellular location is the cell inner membrane. Its function is as follows. Produces ATP from ADP in the presence of a proton gradient across the membrane. The gamma chain is believed to be important in regulating ATPase activity and the flow of protons through the CF(0) complex. The polypeptide is ATP synthase gamma chain (Ruegeria sp. (strain TM1040) (Silicibacter sp.)).